The chain runs to 258 residues: UPF0246 protein Jann_0444 (258 aa).

Belongs to the UPF0246 family.

This Jannaschia sp. (strain CCS1) protein is UPF0246 protein Jann_0444.